The following is a 447-amino-acid chain: Ribosomal protein uS12 methylthiotransferase RimO (447 aa).

The 111-residue stretch at 10 to 120 (PKVGFVSLGC…VVNAVHDVVP (111 aa)) folds into the MTTase N-terminal domain. The [4Fe-4S] cluster site is built by C19, C55, C84, C153, C157, and C160. Positions 139 to 377 (LTPRHYAYLK…MAHQQAISAA (239 aa)) constitute a Radical SAM core domain. Residues 380–447 (QMKIGKEIEV…DEYDLWAEML (68 aa)) enclose the TRAM domain.

The protein belongs to the methylthiotransferase family. RimO subfamily. [4Fe-4S] cluster serves as cofactor.

It localises to the cytoplasm. The catalysed reaction is L-aspartate(89)-[ribosomal protein uS12]-hydrogen + (sulfur carrier)-SH + AH2 + 2 S-adenosyl-L-methionine = 3-methylsulfanyl-L-aspartate(89)-[ribosomal protein uS12]-hydrogen + (sulfur carrier)-H + 5'-deoxyadenosine + L-methionine + A + S-adenosyl-L-homocysteine + 2 H(+). Functionally, catalyzes the methylthiolation of an aspartic acid residue of ribosomal protein uS12. In Pseudomonas savastanoi pv. phaseolicola (strain 1448A / Race 6) (Pseudomonas syringae pv. phaseolicola (strain 1448A / Race 6)), this protein is Ribosomal protein uS12 methylthiotransferase RimO.